The chain runs to 205 residues: Glycerol-3-phosphate acyltransferase (205 aa).

6 helical membrane passes run 5 to 25 (LALGIWAASYLAGSLPAGYLA), 54 to 74 (GPAAAVLLFDVFKGLFAVWLA), 87 to 107 (IVLGAGLAAIVGHSWPVWLAF), 117 to 137 (VGLLLGMHWPVALTVAAVWGV), 138 to 158 (CFAVTRIVSFASIVAAAATPL), and 162 to 182 (LWRAPLPFTLFGLLGGIYIVW).

Belongs to the PlsY family. As to quaternary structure, probably interacts with PlsX.

It is found in the cell inner membrane. The catalysed reaction is an acyl phosphate + sn-glycerol 3-phosphate = a 1-acyl-sn-glycero-3-phosphate + phosphate. It functions in the pathway lipid metabolism; phospholipid metabolism. Catalyzes the transfer of an acyl group from acyl-phosphate (acyl-PO(4)) to glycerol-3-phosphate (G3P) to form lysophosphatidic acid (LPA). This enzyme utilizes acyl-phosphate as fatty acyl donor, but not acyl-CoA or acyl-ACP. This is Glycerol-3-phosphate acyltransferase from Gloeobacter violaceus (strain ATCC 29082 / PCC 7421).